A 347-amino-acid polypeptide reads, in one-letter code: Probable tRNA N6-adenosine threonylcarbamoyltransferase (347 aa).

H109, H113, and Y130 together coordinate a divalent metal cation. Residues Y130–G134, D162, G177, E181, and N277 contribute to the substrate site. Residue D305 participates in a divalent metal cation binding.

Belongs to the KAE1 / TsaD family. As to quaternary structure, component of the EKC/KEOPS complex; the whole complex dimerizes. It depends on a divalent metal cation as a cofactor.

The protein localises to the cytoplasm. The protein resides in the nucleus. The catalysed reaction is L-threonylcarbamoyladenylate + adenosine(37) in tRNA = N(6)-L-threonylcarbamoyladenosine(37) in tRNA + AMP + H(+). Functionally, component of the EKC/KEOPS complex that is required for the formation of a threonylcarbamoyl group on adenosine at position 37 (t(6)A37) in tRNAs that read codons beginning with adenine. The complex is probably involved in the transfer of the threonylcarbamoyl moiety of threonylcarbamoyl-AMP (TC-AMP) to the N6 group of A37. Likely plays a direct catalytic role in this reaction, but requires other protein(s) of the complex to fulfill this activity. The chain is Probable tRNA N6-adenosine threonylcarbamoyltransferase from Drosophila melanogaster (Fruit fly).